Here is a 173-residue protein sequence, read N- to C-terminus: RNA pyrophosphohydrolase (173 aa).

One can recognise a Nudix hydrolase domain in the interval 6–149 (GFRANVGIIL…KRSVYRRALQ (144 aa)). The short motif at 38 to 59 (GGIDRGETPMDAMYRELWEEVG) is the Nudix box element.

It belongs to the Nudix hydrolase family. RppH subfamily. Requires a divalent metal cation as cofactor.

Functionally, accelerates the degradation of transcripts by removing pyrophosphate from the 5'-end of triphosphorylated RNA, leading to a more labile monophosphorylated state that can stimulate subsequent ribonuclease cleavage. This Psychrobacter cryohalolentis (strain ATCC BAA-1226 / DSM 17306 / VKM B-2378 / K5) protein is RNA pyrophosphohydrolase.